The chain runs to 230 residues: Large ribosomal subunit protein uL4 (230 aa).

The interval 59-113 (RQGTHATKTRGEVSGGGKKPYRQKGTGRARQGSTRAPQFTGGGTVHGPQPRDYSQ) is disordered.

Belongs to the universal ribosomal protein uL4 family. Part of the 50S ribosomal subunit.

Its function is as follows. One of the primary rRNA binding proteins, this protein initially binds near the 5'-end of the 23S rRNA. It is important during the early stages of 50S assembly. It makes multiple contacts with different domains of the 23S rRNA in the assembled 50S subunit and ribosome. In terms of biological role, forms part of the polypeptide exit tunnel. This chain is Large ribosomal subunit protein uL4, found in Nocardia farcinica (strain IFM 10152).